The sequence spans 205 residues: 3-demethoxyubiquinol 3-hydroxylase (205 aa).

Residues glutamate 54, glutamate 84, histidine 87, glutamate 136, glutamate 168, and histidine 171 each coordinate Fe cation.

It belongs to the COQ7 family. Requires Fe cation as cofactor.

It localises to the cell membrane. It carries out the reaction a 5-methoxy-2-methyl-3-(all-trans-polyprenyl)benzene-1,4-diol + AH2 + O2 = a 3-demethylubiquinol + A + H2O. The protein operates within cofactor biosynthesis; ubiquinone biosynthesis. Functionally, catalyzes the hydroxylation of 2-nonaprenyl-3-methyl-6-methoxy-1,4-benzoquinol during ubiquinone biosynthesis. The chain is 3-demethoxyubiquinol 3-hydroxylase from Paracidovorax citrulli (strain AAC00-1) (Acidovorax citrulli).